Reading from the N-terminus, the 168-residue chain is Small ribosomal subunit protein uS9 (168 aa).

Residues 1–15 (MAQNEETTEAVEAEE) show a composition bias toward acidic residues. The tract at residues 1–34 (MAQNEETTEAVEAEETLTSYTSESGAAEAAAPKK) is disordered.

It belongs to the universal ribosomal protein uS9 family.

In Arthrobacter sp. (strain FB24), this protein is Small ribosomal subunit protein uS9.